The sequence spans 733 residues: Neutral ceramidase 3 (733 aa).

An N-terminal signal peptide occupies residues 1 to 25 (MTRWSMSMHCTLFLLFLLRLTCIFS). Catalysis depends on serine 307, which acts as the Nucleophile. An N-linked (GlcNAc...) asparagine glycan is attached at asparagine 325.

The protein belongs to the neutral ceramidase family.

The protein localises to the secreted. The protein resides in the endoplasmic reticulum. Its subcellular location is the golgi apparatus. The catalysed reaction is an N-acylsphing-4-enine + H2O = sphing-4-enine + a fatty acid. Hydrolyzes the sphingolipid ceramide into sphingosine and free fatty acid. Promotes oxidative stress resistance. This Arabidopsis thaliana (Mouse-ear cress) protein is Neutral ceramidase 3.